The following is a 403-amino-acid chain: MTESTFPQYPRLVLSKGREKSLLRRHPWVFSGAVSRLEGKANLGETIDIVDHQGKWLARGAWSPASQIRARVWTFDKAESIDIAFFTRRLRQAQQWRDWLAKKDGLDSYRLIAGESDGLPGVTIDRFGYFLVLQLLSAGAEYQRAALISALQTCYPDCAIYDRSDVAVRKKEGMALTQGPVTGELPPALLPIEEHGMKLLVDIQGGHKTGYYLDQRDSRLATRRYVENQRVLNCFSYTGGFAVSALMGGCRQVVSVDTSQDALDIARQNVELNQLDLSKAEFVRDDVFKLLRAYREHGEKFDVIIMDPPKFVENKSQLMGACRGYKDINMLAIQLLNPGGILLTFSCSGLMTSDLFQKIIADAAIDAGRDVQFIEQFRQAADHPVIATYPEGLYLKGFACRVM.

Residues Tyr-9–Arg-88 enclose the PUA domain.

The protein belongs to the methyltransferase superfamily. RlmI family.

The protein localises to the cytoplasm. The enzyme catalyses cytidine(1962) in 23S rRNA + S-adenosyl-L-methionine = 5-methylcytidine(1962) in 23S rRNA + S-adenosyl-L-homocysteine + H(+). In terms of biological role, specifically methylates the cytosine at position 1962 (m5C1962) of 23S rRNA. The sequence is that of Ribosomal RNA large subunit methyltransferase I from Salmonella paratyphi A (strain ATCC 9150 / SARB42).